We begin with the raw amino-acid sequence, 116 residues long: Large ribosomal subunit protein uL18 (116 aa).

Belongs to the universal ribosomal protein uL18 family. Part of the 50S ribosomal subunit; part of the 5S rRNA/L5/L18/L25 subcomplex. Contacts the 5S and 23S rRNAs.

This is one of the proteins that bind and probably mediate the attachment of the 5S RNA into the large ribosomal subunit, where it forms part of the central protuberance. The polypeptide is Large ribosomal subunit protein uL18 (Pseudomonas fluorescens (strain SBW25)).